The chain runs to 553 residues: uncharacterized protein (553 aa).

This is an uncharacterized protein from Rickettsia prowazekii (strain Madrid E).